We begin with the raw amino-acid sequence, 134 residues long: Profilin-1 (134 aa).

A disulfide bridge links Cys-13 with Cys-118. The short motif at 84-100 (AVIRGKKGSGGITIKKT) is the Involved in PIP2 interaction element. A Phosphothreonine modification is found at Thr-114.

Belongs to the profilin family. As to quaternary structure, occurs in many kinds of cells as a complex with monomeric actin in a 1:1 ratio. In terms of processing, phosphorylated by MAP kinases.

Its subcellular location is the cytoplasm. The protein localises to the cytoskeleton. Binds to actin and affects the structure of the cytoskeleton. At high concentrations, profilin prevents the polymerization of actin, whereas it enhances it at low concentrations. In Olea europaea (Common olive), this protein is Profilin-1.